A 371-amino-acid polypeptide reads, in one-letter code: Chorismate synthase (371 aa).

Residues R48 and R54 each contribute to the NADP(+) site. FMN-binding positions include 131–133 (RSS), 245–246 (NA), G290, 305–309 (KPTSS), and R331.

Belongs to the chorismate synthase family. As to quaternary structure, homotetramer. FMNH2 is required as a cofactor.

It carries out the reaction 5-O-(1-carboxyvinyl)-3-phosphoshikimate = chorismate + phosphate. It participates in metabolic intermediate biosynthesis; chorismate biosynthesis; chorismate from D-erythrose 4-phosphate and phosphoenolpyruvate: step 7/7. Functionally, catalyzes the anti-1,4-elimination of the C-3 phosphate and the C-6 proR hydrogen from 5-enolpyruvylshikimate-3-phosphate (EPSP) to yield chorismate, which is the branch point compound that serves as the starting substrate for the three terminal pathways of aromatic amino acid biosynthesis. This reaction introduces a second double bond into the aromatic ring system. The sequence is that of Chorismate synthase from Mesorhizobium japonicum (strain LMG 29417 / CECT 9101 / MAFF 303099) (Mesorhizobium loti (strain MAFF 303099)).